The primary structure comprises 896 residues: Protein translocase subunit SecA (896 aa).

ATP-binding positions include Gln87, Gly105–Thr109, and Asp512. Residues Arg858–Ser886 are disordered. Residues Val869–Arg878 show a composition bias toward basic and acidic residues. Cys882, Cys884, Cys893, and Cys894 together coordinate Zn(2+).

The protein belongs to the SecA family. Monomer and homodimer. Part of the essential Sec protein translocation apparatus which comprises SecA, SecYEG and auxiliary proteins SecDF-YajC and YidC. Zn(2+) is required as a cofactor.

Its subcellular location is the cell inner membrane. The protein localises to the cytoplasm. The enzyme catalyses ATP + H2O + cellular proteinSide 1 = ADP + phosphate + cellular proteinSide 2.. Part of the Sec protein translocase complex. Interacts with the SecYEG preprotein conducting channel. Has a central role in coupling the hydrolysis of ATP to the transfer of proteins into and across the cell membrane, serving as an ATP-driven molecular motor driving the stepwise translocation of polypeptide chains across the membrane. This Syntrophotalea carbinolica (strain DSM 2380 / NBRC 103641 / GraBd1) (Pelobacter carbinolicus) protein is Protein translocase subunit SecA.